The sequence spans 374 residues: Queuine tRNA-ribosyltransferase (374 aa).

Asp-89 (proton acceptor) is an active-site residue. Residues 89–93, Asp-143, Gln-187, and Gly-214 each bind substrate; that span reads DSGGF. Residues 245 to 251 are RNA binding; the sequence is GVGKPED. The active-site Nucleophile is Asp-264. Residues 269-273 form an RNA binding; important for wobble base 34 recognition region; sequence TRNAR. Zn(2+) is bound by residues Cys-302, Cys-304, Cys-307, and His-333.

The protein belongs to the queuine tRNA-ribosyltransferase family. Homodimer. Within each dimer, one monomer is responsible for RNA recognition and catalysis, while the other monomer binds to the replacement base PreQ1. Requires Zn(2+) as cofactor.

The enzyme catalyses 7-aminomethyl-7-carbaguanine + guanosine(34) in tRNA = 7-aminomethyl-7-carbaguanosine(34) in tRNA + guanine. The protein operates within tRNA modification; tRNA-queuosine biosynthesis. Functionally, catalyzes the base-exchange of a guanine (G) residue with the queuine precursor 7-aminomethyl-7-deazaguanine (PreQ1) at position 34 (anticodon wobble position) in tRNAs with GU(N) anticodons (tRNA-Asp, -Asn, -His and -Tyr). Catalysis occurs through a double-displacement mechanism. The nucleophile active site attacks the C1' of nucleotide 34 to detach the guanine base from the RNA, forming a covalent enzyme-RNA intermediate. The proton acceptor active site deprotonates the incoming PreQ1, allowing a nucleophilic attack on the C1' of the ribose to form the product. After dissociation, two additional enzymatic reactions on the tRNA convert PreQ1 to queuine (Q), resulting in the hypermodified nucleoside queuosine (7-(((4,5-cis-dihydroxy-2-cyclopenten-1-yl)amino)methyl)-7-deazaguanosine). The chain is Queuine tRNA-ribosyltransferase from Shewanella loihica (strain ATCC BAA-1088 / PV-4).